The following is a 300-amino-acid chain: Tubulin polyglutamylase complex subunit 2 (300 aa).

Positions 257-300 are disordered; it reads KIVIPKKKGPVQPAGGQKGPSGPSGPSTSSTSKSSSGSGNPTRK. Over residues 276–300 the composition is skewed to low complexity; sequence PSGPSGPSTSSTSKSSSGSGNPTRK.

As to quaternary structure, part of the neuronal tubulin polyglutamylase complex which contains TPGS1, TPGS2, TTLL1, LRRC49 and NICN1. Interacts with CSTPP1 and LRRC49.

It is found in the cytoplasm. It localises to the cytoskeleton. Its subcellular location is the microtubule organizing center. The protein resides in the centrosome. The protein localises to the centriolar satellite. Its function is as follows. Subunit of the tubulin polyglutamylase complex (TPGC). The complex mediates cilia and flagella polyglutamylation which is essential for their biogenesis and motility. This Homo sapiens (Human) protein is Tubulin polyglutamylase complex subunit 2 (TPGS2).